Consider the following 342-residue polypeptide: Holliday junction branch migration complex subunit RuvB (342 aa).

Residues 1-21 form a disordered region; it reads MSVEHSPVDPSAEPPEKAEEA. The interval 1–184 is large ATPase domain (RuvB-L); sequence MSVEHSPVDP…FGFTAQLDYY (184 aa). ATP is bound by residues Leu23, Arg24, Gly65, Lys68, Thr69, Thr70, 131-133, Arg174, Tyr184, and Arg221; that span reads EDF. Residue Thr69 participates in Mg(2+) binding. The interval 185–255 is small ATPAse domain (RuvB-S); that stretch reads EVADLERIVT…GAETALDLYE (71 aa). The interval 258 to 342 is head domain (RuvB-H); sequence PLGLDRLDRA…PPDSSGEGLF (85 aa). 2 residues coordinate DNA: Arg313 and Arg318.

This sequence belongs to the RuvB family. In terms of assembly, homohexamer. Forms an RuvA(8)-RuvB(12)-Holliday junction (HJ) complex. HJ DNA is sandwiched between 2 RuvA tetramers; dsDNA enters through RuvA and exits via RuvB. An RuvB hexamer assembles on each DNA strand where it exits the tetramer. Each RuvB hexamer is contacted by two RuvA subunits (via domain III) on 2 adjacent RuvB subunits; this complex drives branch migration. In the full resolvosome a probable DNA-RuvA(4)-RuvB(12)-RuvC(2) complex forms which resolves the HJ.

It is found in the cytoplasm. It catalyses the reaction ATP + H2O = ADP + phosphate + H(+). In terms of biological role, the RuvA-RuvB-RuvC complex processes Holliday junction (HJ) DNA during genetic recombination and DNA repair, while the RuvA-RuvB complex plays an important role in the rescue of blocked DNA replication forks via replication fork reversal (RFR). RuvA specifically binds to HJ cruciform DNA, conferring on it an open structure. The RuvB hexamer acts as an ATP-dependent pump, pulling dsDNA into and through the RuvAB complex. RuvB forms 2 homohexamers on either side of HJ DNA bound by 1 or 2 RuvA tetramers; 4 subunits per hexamer contact DNA at a time. Coordinated motions by a converter formed by DNA-disengaged RuvB subunits stimulates ATP hydrolysis and nucleotide exchange. Immobilization of the converter enables RuvB to convert the ATP-contained energy into a lever motion, pulling 2 nucleotides of DNA out of the RuvA tetramer per ATP hydrolyzed, thus driving DNA branch migration. The RuvB motors rotate together with the DNA substrate, which together with the progressing nucleotide cycle form the mechanistic basis for DNA recombination by continuous HJ branch migration. Branch migration allows RuvC to scan DNA until it finds its consensus sequence, where it cleaves and resolves cruciform DNA. The polypeptide is Holliday junction branch migration complex subunit RuvB (Cutibacterium acnes (strain DSM 16379 / KPA171202) (Propionibacterium acnes)).